A 373-amino-acid chain; its full sequence is Innexin shaking-B (373 aa).

The Cytoplasmic portion of the chain corresponds to 1-21; sequence MLDIFRGLKSLVKISHVNTDS. Residues 22–42 form a helical membrane-spanning segment; the sequence is PVFRLHYSITVIILMSFSLIV. The Extracellular portion of the chain corresponds to 43-106; that stretch reads TTRQYVGNPI…SAEATAADKK (64 aa). Residues 107–127 traverse the membrane as a helical segment; sequence IYKYYQWVCFCLFFQAILFYT. Over 128–176 the chain is Cytoplasmic; the sequence is PRWLWKSWEGGKIHALMMDLDIGICSEIEKKQKKKLLLDYLWDNLRYHN. The chain crosses the membrane as a helical span at residues 177 to 199; that stretch reads WWAYRYYVCEFLSLCNVIGQMFL. Residues 200 to 268 lie on the Extracellular side of the membrane; it reads MNRFFDGEFM…ILPLNVVNEK (69 aa). A helical transmembrane segment spans residues 269–289; sequence IYIFLWFWFIILTILTTLTIF. At 290–373 the chain is on the cytoplasmic side; the sequence is YRIIIIFSPR…PGMKGEIQDA (84 aa).

It belongs to the pannexin family. As to quaternary structure, monomer.

The protein localises to the cell membrane. It localises to the cell junction. It is found in the gap junction. Its function is as follows. Structural component of the gap junctions at electrical synapses in distal and mid-depth levels in the lamina. This chain is Innexin shaking-B, found in Anopheles gambiae (African malaria mosquito).